Consider the following 279-residue polypeptide: Large ribosomal subunit protein uL2 (279 aa).

2 disordered regions span residues 32 to 58 (SLLT…GGGH) and 223 to 279 (GVAM…RKRG). Composition is skewed to basic residues over residues 40–58 (KGGR…GGGH) and 269–279 (VRRRYATRKRG).

This sequence belongs to the universal ribosomal protein uL2 family. As to quaternary structure, part of the 50S ribosomal subunit. Forms a bridge to the 30S subunit in the 70S ribosome.

Functionally, one of the primary rRNA binding proteins. Required for association of the 30S and 50S subunits to form the 70S ribosome, for tRNA binding and peptide bond formation. It has been suggested to have peptidyltransferase activity; this is somewhat controversial. Makes several contacts with the 16S rRNA in the 70S ribosome. The sequence is that of Large ribosomal subunit protein uL2 from Salinispora tropica (strain ATCC BAA-916 / DSM 44818 / JCM 13857 / NBRC 105044 / CNB-440).